The following is a 743-amino-acid chain: 1,4-alpha-glucan branching enzyme GlgB (743 aa).

D423 functions as the Nucleophile in the catalytic mechanism. E476 serves as the catalytic Proton donor.

This sequence belongs to the glycosyl hydrolase 13 family. GlgB subfamily. As to quaternary structure, monomer.

The enzyme catalyses Transfers a segment of a (1-&gt;4)-alpha-D-glucan chain to a primary hydroxy group in a similar glucan chain.. The protein operates within glycan biosynthesis; glycogen biosynthesis. In terms of biological role, catalyzes the formation of the alpha-1,6-glucosidic linkages in glycogen by scission of a 1,4-alpha-linked oligosaccharide from growing alpha-1,4-glucan chains and the subsequent attachment of the oligosaccharide to the alpha-1,6 position. The chain is 1,4-alpha-glucan branching enzyme GlgB from Pseudomonas fluorescens (strain Pf0-1).